The primary structure comprises 651 residues: Beta-mannosyltransferase 7 (651 aa).

The Cytoplasmic segment spans residues 1 to 19 (MKLEMSSYLHKVPNTGITN). A helical membrane pass occupies residues 20-42 (LSNSKSIVFIMFCATLLFIITSS). Topologically, residues 43 to 651 (RYLTGSESLG…VKIDEKSEET (609 aa)) are extracellular. 2 N-linked (GlcNAc...) asparagine glycosylation sites follow: N271 and N423.

The protein belongs to the BMT family.

The protein resides in the membrane. Its function is as follows. Beta-mannosyltransferase involved in cell wall biosynthesis through beta-1,2-mannosylation of cell wall phosphopeptidomannan. This chain is Beta-mannosyltransferase 7 (BMT7), found in Candida albicans (strain SC5314 / ATCC MYA-2876) (Yeast).